Here is a 112-residue protein sequence, read N- to C-terminus: cAMP-regulated phosphoprotein 19 (112 aa).

Met-1 is modified (N-acetylmethionine). Over residues 1 to 11 the composition is skewed to low complexity; it reads MSAEVPEAASA. The interval 1–49 is disordered; the sequence is MSAEVPEAASAEEQKEMEDKVTSPEKAEEAKLKARYPHLGQKPGGSDFL. An N-acetylserine modification is found at Ser-2. Ser-2 and Ser-23 each carry phosphoserine. Residues 12-32 are compositionally biased toward basic and acidic residues; it reads EEQKEMEDKVTSPEKAEEAKL. A phosphoserine; by GWL mark is found at Ser-62 and Ser-104. A disordered region spans residues 72–112; sequence MKNKQLPTATPDKTEVTGDHIPTPQDLPQRKPSLVASKLAG. A Phosphoserine; by PKA modification is found at Ser-104. Lys-109 bears the N6-acetyllysine mark.

Interacts (when phosphorylated at Ser-62) with PPP2R2D. Interacts with SNCA. Interacts with PPP2R2A; the interaction is direct and this interaction inhibits PP2A activity. Post-translationally, phosphorylation at Ser-62 by MASTL/GWL during mitosis is essential for interaction with PPP2R2D (PR55-delta) and subsequent inactivation of PP2A. Phosphorylated by PKA. Isoform ARPP-19 is found in all brain regions and also present in non-neuronal tissues. Isoform ARPP-16 is enriched in the caudate nucleus, found in low levels in cerebral cortex.

It localises to the cytoplasm. Its function is as follows. Protein phosphatase inhibitor that specifically inhibits protein phosphatase 2A (PP2A) during mitosis. Inhibition of PP2A is enhanced when ARPP19 is phosphorylated. When phosphorylated at Ser-62 during mitosis, specifically interacts with PPP2R2D (PR55-delta) and inhibits its activity, leading to inactivation of PP2A, an essential condition to keep cyclin-B1-CDK1 activity high during M phase. May indirectly enhance GAP-43 expression. This is cAMP-regulated phosphoprotein 19 (ARPP19) from Bos taurus (Bovine).